We begin with the raw amino-acid sequence, 880 residues long: Tyrosine-protein kinase receptor TYRO3 (880 aa).

The N-terminal stretch at 1 to 30 (MALRRSMGRPGLRPLLLAGLASLLLPGSAA) is a signal peptide. 2 Ig-like C2-type domains span residues 31–118 (AGLK…TKIS) and 129–210 (PFFT…AIIR). At 31–419 (AGLKLMGAPV…QGPPHSRTSW (389 aa)) the chain is on the extracellular side. N-linked (GlcNAc...) asparagine glycans are attached at residues Asn53, Asn75, Asn181, Asn220, Asn230, Asn283, Asn356, and Asn370. 2 disulfide bridges follow: Cys54–Cys107 and Cys150–Cys193. Fibronectin type-III domains follow at residues 217–310 (APFN…TKGL) and 315–406 (APQN…SHDH). A helical transmembrane segment spans residues 420 to 440 (VPVVLGVLTALITAAALALIL). Topologically, residues 441-880 (LRKRRKETRF…QQGLLPHSSC (440 aa)) are cytoplasmic. At Ser456 the chain carries Phosphoserine. The Protein kinase domain maps to 508–785 (FTLGRMLGKG…LENILGHLSV (278 aa)). ATP-binding positions include 514 to 522 (LGKGEFGSV) and Lys540. Catalysis depends on Asp645, which acts as the Proton acceptor. Tyr671, Tyr675, Tyr676, and Tyr794 each carry phosphotyrosine; by autocatalysis. Disordered regions lie at residues 804 to 827 (AENGSPELPCGEQSSSEAGDGSGM) and 842 to 864 (SPGGLAESPGQLEQQPESPLNEN). 2 positions are modified to phosphoserine: Ser808 and Ser859. The segment covering 852–864 (QLEQQPESPLNEN) has biased composition (polar residues).

The protein belongs to the protein kinase superfamily. Tyr protein kinase family. AXL/UFO subfamily. Monomer and homodimer. Interacts (via N-terminus) with extracellular ligands TULP1 and GAS6. Interacts with PIK3R1; this interaction increases PI3-kinase activity. Post-translationally, autophosphorylated. In terms of tissue distribution, abundant in the brain and lower levels in other tissues.

Its subcellular location is the cell membrane. The catalysed reaction is L-tyrosyl-[protein] + ATP = O-phospho-L-tyrosyl-[protein] + ADP + H(+). Its function is as follows. Receptor tyrosine kinase that transduces signals from the extracellular matrix into the cytoplasm by binding to several ligands including TULP1 or GAS6. Regulates many physiological processes including cell survival, migration and differentiation. Ligand binding at the cell surface induces dimerization and autophosphorylation of TYRO3 on its intracellular domain that provides docking sites for downstream signaling molecules. Following activation by ligand, interacts with PIK3R1 and thereby enhances PI3-kinase activity. Activates the AKT survival pathway, including nuclear translocation of NF-kappa-B and up-regulation of transcription of NF-kappa-B-regulated genes. TYRO3 signaling plays a role in various processes such as neuron protection from excitotoxic injury, platelet aggregation and cytoskeleton reorganization. Also plays an important role in inhibition of Toll-like receptors (TLRs)-mediated innate immune response by activating STAT1, which selectively induces production of suppressors of cytokine signaling SOCS1 and SOCS3. The polypeptide is Tyrosine-protein kinase receptor TYRO3 (Tyro3) (Rattus norvegicus (Rat)).